The following is a 116-amino-acid chain: Ribosome-binding factor A (116 aa).

This sequence belongs to the RbfA family. In terms of assembly, monomer. Binds 30S ribosomal subunits, but not 50S ribosomal subunits or 70S ribosomes.

It is found in the cytoplasm. Functionally, one of several proteins that assist in the late maturation steps of the functional core of the 30S ribosomal subunit. Associates with free 30S ribosomal subunits (but not with 30S subunits that are part of 70S ribosomes or polysomes). Required for efficient processing of 16S rRNA. May interact with the 5'-terminal helix region of 16S rRNA. This is Ribosome-binding factor A from Levilactobacillus brevis (strain ATCC 367 / BCRC 12310 / CIP 105137 / JCM 1170 / LMG 11437 / NCIMB 947 / NCTC 947) (Lactobacillus brevis).